A 612-amino-acid polypeptide reads, in one-letter code: Isocitrate dehydrogenase kinase/phosphatase (612 aa).

Residues Ala327–Leu333 and Lys348 contribute to the ATP site. The active site involves Asp383. The tract at residues Ala593–Ala612 is disordered.

It belongs to the AceK family.

The protein resides in the cytoplasm. The enzyme catalyses L-seryl-[isocitrate dehydrogenase] + ATP = O-phospho-L-seryl-[isocitrate dehydrogenase] + ADP + H(+). Functionally, bifunctional enzyme which can phosphorylate or dephosphorylate isocitrate dehydrogenase (IDH) on a specific serine residue. This is a regulatory mechanism which enables bacteria to bypass the Krebs cycle via the glyoxylate shunt in response to the source of carbon. When bacteria are grown on glucose, IDH is fully active and unphosphorylated, but when grown on acetate or ethanol, the activity of IDH declines drastically concomitant with its phosphorylation. The chain is Isocitrate dehydrogenase kinase/phosphatase from Paraburkholderia phytofirmans (strain DSM 17436 / LMG 22146 / PsJN) (Burkholderia phytofirmans).